Reading from the N-terminus, the 291-residue chain is Beta-lactamase CTX-M-15 (291 aa).

The first 28 residues, 1 to 28 (MVKKSLRQFTLMATATVTLLLGSVPLYA), serve as a signal peptide directing secretion. Ser-73 functions as the Nucleophile; acyl-ester intermediate in the catalytic mechanism. Residues Lys-76, Ser-133, Glu-169, and Ser-240 each contribute to the a beta-lactam site.

This sequence belongs to the class-A beta-lactamase family. Monomer.

It is found in the secreted. The enzyme catalyses a beta-lactam + H2O = a substituted beta-amino acid. Inhibited by the beta-lactamase-blocking agents clavulanic acid and avibactam, via a covalent binding to Ser-73. Functionally, extended-spectrum beta-lactamase (ESBL) which confers resistance to penicillins, as well as first, second, third and fourth-generation cephalosporins. Has cefotaxime- and ceftazidime-hydrolyzing activity. Inactive against the carbapenem antibiotics, imipenem, meropenem and ertapenem. The polypeptide is Beta-lactamase CTX-M-15 (Escherichia coli O25b:H4).